The chain runs to 206 residues: Small ribosomal subunit protein uS4 (206 aa).

The S4 RNA-binding domain maps to 96-156; it reads TRLDNVVYRM…EKSKTQARII (61 aa).

Belongs to the universal ribosomal protein uS4 family. As to quaternary structure, part of the 30S ribosomal subunit. Contacts protein S5. The interaction surface between S4 and S5 is involved in control of translational fidelity.

Functionally, one of the primary rRNA binding proteins, it binds directly to 16S rRNA where it nucleates assembly of the body of the 30S subunit. In terms of biological role, with S5 and S12 plays an important role in translational accuracy. This is Small ribosomal subunit protein uS4 from Colwellia psychrerythraea (strain 34H / ATCC BAA-681) (Vibrio psychroerythus).